Reading from the N-terminus, the 218-residue chain is Octanoyltransferase (218 aa).

The region spanning 32–211 is the BPL/LPL catalytic domain; it reads INTYDEIWFL…KLSQLLNVSI (180 aa). Substrate is bound by residues 75–82, 142–144, and 155–157; these read RGGQITYH, SLG, and GLS. The active-site Acyl-thioester intermediate is Cys173.

The protein belongs to the LipB family.

It is found in the cytoplasm. The catalysed reaction is octanoyl-[ACP] + L-lysyl-[protein] = N(6)-octanoyl-L-lysyl-[protein] + holo-[ACP] + H(+). Its pathway is protein modification; protein lipoylation via endogenous pathway; protein N(6)-(lipoyl)lysine from octanoyl-[acyl-carrier-protein]: step 1/2. Functionally, catalyzes the transfer of endogenously produced octanoic acid from octanoyl-acyl-carrier-protein onto the lipoyl domains of lipoate-dependent enzymes. Lipoyl-ACP can also act as a substrate although octanoyl-ACP is likely to be the physiological substrate. This chain is Octanoyltransferase, found in Buchnera aphidicola subsp. Schizaphis graminum (strain Sg).